Consider the following 309-residue polypeptide: Protein FdhE (309 aa).

Belongs to the FdhE family.

It localises to the cytoplasm. Functionally, necessary for formate dehydrogenase activity. This Shigella boydii serotype 18 (strain CDC 3083-94 / BS512) protein is Protein FdhE.